The following is a 266-amino-acid chain: Proteasome subunit beta type-7 (266 aa).

Positions 1–34 are cleaved as a propeptide — removed in mature form; that stretch reads MENLNRGGFDFDLCNRNNVLEKTGLRMKGFMKTG. The active-site Nucleophile is threonine 35.

Belongs to the peptidase T1B family. In terms of assembly, the 26S proteasome consists of a 20S proteasome core and two 19S regulatory subunits. The 20S proteasome core is composed of 28 subunits that are arranged in four stacked rings, resulting in a barrel-shaped structure. The two end rings are each formed by seven alpha subunits, and the two central rings are each formed by seven beta subunits. The catalytic chamber with the active sites is on the inside of the barrel.

It localises to the cytoplasm. Its subcellular location is the nucleus. The catalysed reaction is Cleavage of peptide bonds with very broad specificity.. In terms of biological role, the proteasome is a multicatalytic proteinase complex which is characterized by its ability to cleave peptides with Arg, Phe, Tyr, Leu, and Glu adjacent to the leaving group at neutral or slightly basic pH. The proteasome has an ATP-dependent proteolytic activity. This Dictyostelium discoideum (Social amoeba) protein is Proteasome subunit beta type-7 (psmB7).